The sequence spans 281 residues: uncharacterized protein (281 aa).

A helical transmembrane segment spans residues 5-27 (AYVTVIYGNNIYLTGALVLGYTL).

It is found in the membrane. This is an uncharacterized protein from Acanthamoeba polyphaga mimivirus (APMV).